The primary structure comprises 579 residues: uncharacterized protein (579 aa).

The next 3 membrane-spanning stretches (helical) occupy residues 173-193 (IAMGLAGLAGGALIGLTGGLA), 196-216 (FVAAGLGTLFAGLGLGTMIGA), and 218-238 (YLGTLITSAPMITALFGGFGA).

This sequence belongs to the TMCO4 family.

The protein resides in the cytoplasm. Its subcellular location is the nucleus membrane. This is an uncharacterized protein from Schizosaccharomyces pombe (strain 972 / ATCC 24843) (Fission yeast).